The primary structure comprises 244 residues: 2-C-methyl-D-erythritol 4-phosphate cytidylyltransferase (244 aa).

Belongs to the IspD/TarI cytidylyltransferase family. IspD subfamily.

The catalysed reaction is 2-C-methyl-D-erythritol 4-phosphate + CTP + H(+) = 4-CDP-2-C-methyl-D-erythritol + diphosphate. The protein operates within isoprenoid biosynthesis; isopentenyl diphosphate biosynthesis via DXP pathway; isopentenyl diphosphate from 1-deoxy-D-xylulose 5-phosphate: step 2/6. In terms of biological role, catalyzes the formation of 4-diphosphocytidyl-2-C-methyl-D-erythritol from CTP and 2-C-methyl-D-erythritol 4-phosphate (MEP). This Solibacter usitatus (strain Ellin6076) protein is 2-C-methyl-D-erythritol 4-phosphate cytidylyltransferase.